Consider the following 380-residue polypeptide: Glycine betaine/carnitine/choline transport ATP-binding protein OpuCA (380 aa).

The region spanning 2–236 is the ABC transporter domain; that stretch reads LKLEQVSKVY…PANEFVEEFI (235 aa). 35–42 is a binding site for ATP; the sequence is GPSGCGKT. 2 consecutive CBS domains span residues 255–314 and 315–373; these read MNRT…VGDV and YRSD…WGDE.

Belongs to the ABC transporter superfamily. In terms of assembly, the complex is composed of two ATP-binding proteins (OpuCA), two transmembrane proteins (OpuCB and OpuCD) and a solute-binding protein (OpuCC).

With respect to regulation, binds cyclic di-AMP (c-di-AMP), which may regulate the transporter activity. Functionally, involved in a high affinity multicomponent binding-protein-dependent transport system for glycine betaine, carnitine and choline; probably responsible for energy coupling to the transport system. The sequence is that of Glycine betaine/carnitine/choline transport ATP-binding protein OpuCA (opuCA) from Bacillus subtilis (strain 168).